Reading from the N-terminus, the 352-residue chain is Fe(3+) ions import ATP-binding protein FbpC (352 aa).

Positions Leu5 to Ile239 constitute an ABC transporter domain. Residue Gly37–Thr44 coordinates ATP.

This sequence belongs to the ABC transporter superfamily. Fe(3+) ion importer (TC 3.A.1.10) family. The complex is composed of two ATP-binding proteins (FbpC), two transmembrane proteins (FbpB) and a solute-binding protein (FbpA).

Its subcellular location is the cell inner membrane. It carries out the reaction Fe(3+)(out) + ATP + H2O = Fe(3+)(in) + ADP + phosphate + H(+). Its function is as follows. Part of the ABC transporter complex FbpABC involved in Fe(3+) ions import. Responsible for energy coupling to the transport system. This chain is Fe(3+) ions import ATP-binding protein FbpC, found in Neisseria gonorrhoeae.